The primary structure comprises 179 residues: Putative 5'(3')-deoxyribonucleotidase (179 aa).

Aspartate 9 functions as the Nucleophile in the catalytic mechanism. 3 residues coordinate Mg(2+): aspartate 9, aspartate 11, and aspartate 135. Aspartate 11 (proton donor) is an active-site residue.

This sequence belongs to the 5'(3')-deoxyribonucleotidase family. Mg(2+) serves as cofactor.

Its function is as follows. Dephosphorylates the 5' and 2'(3')-phosphates of deoxyribonucleotides. The chain is Putative 5'(3')-deoxyribonucleotidase from Staphylococcus epidermidis (strain ATCC 12228 / FDA PCI 1200).